The chain runs to 248 residues: Ribosomal RNA small subunit methyltransferase G (248 aa).

S-adenosyl-L-methionine is bound by residues Gly85, Phe90, 108–110, 137–138, and Arg156; these read DSS and AE.

It belongs to the methyltransferase superfamily. RNA methyltransferase RsmG family.

Its subcellular location is the cytoplasm. In terms of biological role, specifically methylates the N7 position of a guanine in 16S rRNA. The protein is Ribosomal RNA small subunit methyltransferase G of Prochlorococcus marinus (strain NATL2A).